Reading from the N-terminus, the 336-residue chain is Telomere-binding protein cav (336 aa).

A required for binding to Su(var)205 region spans residues 107-328 (RKKMVQPYPE…TITFQNSESE (222 aa)). Disordered stretches follow at residues 137–158 (RLDR…SPAR) and 199–218 (SSDL…SEFQ). 2 short sequence motifs (su(var)205-binding Pro-containing repeat) span residues 225–231 (PETAINE) and 289–295 (PETEMNE). A compositionally biased stretch (polar residues) spans 308 to 327 (MSIGPSIDSEGTITFQNSES). Residues 308–336 (MSIGPSIDSEGTITFQNSESEPIDVDSIA) are disordered.

Interacts (via C-terminus) with Su(var)205 dimer (via hinge and chromoshadow domain) and with moi to form the terminin, telomere-capping, complex. Interacts with HP6, which is also part of the terminin complex.

It is found in the nucleus. Its subcellular location is the chromosome. It localises to the telomere. In terms of biological role, binds to chromosome ends in a sequence-dependent manner and is required for telomere capping. The protein is Telomere-binding protein cav of Drosophila sechellia (Fruit fly).